A 134-amino-acid polypeptide reads, in one-letter code: Holo-[acyl-carrier-protein] synthase (134 aa).

Residues D8 and E57 each coordinate Mg(2+).

This sequence belongs to the P-Pant transferase superfamily. AcpS family. Requires Mg(2+) as cofactor.

The protein resides in the cytoplasm. The catalysed reaction is apo-[ACP] + CoA = holo-[ACP] + adenosine 3',5'-bisphosphate + H(+). Its function is as follows. Transfers the 4'-phosphopantetheine moiety from coenzyme A to a Ser of acyl-carrier-protein. The polypeptide is Holo-[acyl-carrier-protein] synthase (Rhizobium leguminosarum bv. trifolii (strain WSM2304)).